A 563-amino-acid chain; its full sequence is Sulfite reductase [NADPH] hemoprotein beta-component (563 aa).

Cys427, Cys433, Cys472, and Cys476 together coordinate [4Fe-4S] cluster. Cys476 serves as a coordination point for siroheme.

It belongs to the nitrite and sulfite reductase 4Fe-4S domain family. As to quaternary structure, alpha(8)-beta(8). The alpha component is a flavoprotein, the beta component is a hemoprotein. Requires siroheme as cofactor. [4Fe-4S] cluster is required as a cofactor.

The catalysed reaction is hydrogen sulfide + 3 NADP(+) + 3 H2O = sulfite + 3 NADPH + 4 H(+). It participates in sulfur metabolism; hydrogen sulfide biosynthesis; hydrogen sulfide from sulfite (NADPH route): step 1/1. Functionally, component of the sulfite reductase complex that catalyzes the 6-electron reduction of sulfite to sulfide. This is one of several activities required for the biosynthesis of L-cysteine from sulfate. This chain is Sulfite reductase [NADPH] hemoprotein beta-component, found in Acidithiobacillus ferrooxidans (strain ATCC 53993 / BNL-5-31) (Leptospirillum ferrooxidans (ATCC 53993)).